Reading from the N-terminus, the 757-residue chain is uncharacterized protein (757 aa).

One can recognise an S1 motif domain in the interval 640 to 709 (GMILEGVVSN…ARKRIALTMR (70 aa)). Basic and acidic residues predominate over residues 710 to 741 (LDDEPGGAKHKMPSENRSRERTAGRKPQRNDR). A disordered region spans residues 710–757 (LDDEPGGAKHKMPSENRSRERTAGRKPQRNDRAPANSAMADAFAKLKR).

This is an uncharacterized protein from Neisseria meningitidis serogroup A / serotype 4A (strain DSM 15465 / Z2491).